The following is a 70-amino-acid chain: MKFLVNVALVFMVVYISYIYAAPEPEPAPEPEAEADAEADPEAGIGAVLKVLTTGLPALISWIKRKRQQG.

The signal sequence occupies residues 1–21 (MKFLVNVALVFMVVYISYIYA). A propeptide spans 22–43 (APEPEPAPEPEAEADAEADPEA) (removed by a dipeptidylpeptidase). Glycine 44 bears the N-formylglycine; partial mark. Glutamine 69 bears the Glutamine amide mark.

Belongs to the melittin family. Monomer (in solution and for integration into membranes), homotetramer (in solution and potentially as a toroidal pore in membranes), and potenially homomultimer (as a toroidal pore in membranes). In terms of tissue distribution, expressed by the venom gland.

Its subcellular location is the secreted. It localises to the target cell membrane. Melittin: Main toxin of bee venom with strong antimicrobial activity and hemolytic activity. It has enhancing effects on bee venom phospholipase A2 activity. This amphipathic toxin binds to negatively charged membrane surface and forms pore by inserting into lipid bilayers inducing the leakage of ions and molecules and the enhancement of permeability that ultimately leads to cell lysis. It acts as a voltage-gated pore with higher selectivity for anions over cations. The ion conductance has been shown to be voltage-dependent. Self-association of melittin in membranes is promoted by high ionic strength, but not by the presence of negatively charged lipids. In vivo, intradermal injection into healthy human volunteers produce sharp pain sensation and an inflammatory response. It produces pain by activating primary nociceptor cells directly and indirectly due to its ability to activate plasma membrane phospholipase A2 and its pore-forming activity. In the context of inflammation and cancer tests, is highly cytotoxic to normal cells, highly induces calcium signaling and almost completely prevents cAMP production. In addition, prevents LPS-induced nitric oxid (NO) synthesis but does not affect the IP3 signaling and pro-inflammatory activation of endothelial cells. Also shows significant antiproliferative activity on the breast cancer cell line MDA-MB-231. Functionally, melittin-S: 1.4-fold less hemolytic and adopts a less organized secondary structure than melittin. In terms of biological role, melittin-2: Has strong hemolytic activity. The polypeptide is Melittin (MELT) (Apis mellifera (Honeybee)).